A 605-amino-acid polypeptide reads, in one-letter code: Isocitrate dehydrogenase kinase/phosphatase (605 aa).

ATP is bound by residues 327-333 (APGIKGL) and Lys-348. Asp-383 is a catalytic residue.

It belongs to the AceK family.

The protein localises to the cytoplasm. The enzyme catalyses L-seryl-[isocitrate dehydrogenase] + ATP = O-phospho-L-seryl-[isocitrate dehydrogenase] + ADP + H(+). Its function is as follows. Bifunctional enzyme which can phosphorylate or dephosphorylate isocitrate dehydrogenase (IDH) on a specific serine residue. This is a regulatory mechanism which enables bacteria to bypass the Krebs cycle via the glyoxylate shunt in response to the source of carbon. When bacteria are grown on glucose, IDH is fully active and unphosphorylated, but when grown on acetate or ethanol, the activity of IDH declines drastically concomitant with its phosphorylation. In Burkholderia lata (strain ATCC 17760 / DSM 23089 / LMG 22485 / NCIMB 9086 / R18194 / 383), this protein is Isocitrate dehydrogenase kinase/phosphatase.